Consider the following 494-residue polypeptide: Aspartyl/glutamyl-tRNA(Asn/Gln) amidotransferase subunit B (494 aa).

Belongs to the GatB/GatE family. GatB subfamily. In terms of assembly, heterotrimer of A, B and C subunits.

It catalyses the reaction L-glutamyl-tRNA(Gln) + L-glutamine + ATP + H2O = L-glutaminyl-tRNA(Gln) + L-glutamate + ADP + phosphate + H(+). The enzyme catalyses L-aspartyl-tRNA(Asn) + L-glutamine + ATP + H2O = L-asparaginyl-tRNA(Asn) + L-glutamate + ADP + phosphate + 2 H(+). In terms of biological role, allows the formation of correctly charged Asn-tRNA(Asn) or Gln-tRNA(Gln) through the transamidation of misacylated Asp-tRNA(Asn) or Glu-tRNA(Gln) in organisms which lack either or both of asparaginyl-tRNA or glutaminyl-tRNA synthetases. The reaction takes place in the presence of glutamine and ATP through an activated phospho-Asp-tRNA(Asn) or phospho-Glu-tRNA(Gln). The chain is Aspartyl/glutamyl-tRNA(Asn/Gln) amidotransferase subunit B from Nitrobacter hamburgensis (strain DSM 10229 / NCIMB 13809 / X14).